A 952-amino-acid polypeptide reads, in one-letter code: MIEKTYQPSDIESRMSRVWEEAGAFKAGRPERREAEPFTIVIPPPNVTGSLHMGHALNNTLQDVLCRFERMRGRDVLWQPGTDHAGIATQMVVERQLMERKEPGRREMGRARFLERVWQWKAESGGVIVNQLKRLGASCDWSRERFTMDEGLSRAVAKVFVELHRAGLIYKDKRLVNWDPKLLTAISDLEVKQVEVKGSLWHLRYPIEGKAFDPSDPSTYIVVATTRPETMLGDTAVAVHPENAKLEYLIGSNVVLPLAGRIIPIVGDDYADPEKGTGAVKITPAHDFNDFEVGRRHHLPQISVLDREGRLTLSENEDFLRGLPSGALMLAEEFDGMDRFAARKAIVARLEEFGFLDKIEPHTHMVPHGDRSNAVVEPYLTDQWYVDAKELARPAMAAVRSGETAFVPKNWEKTYFEWMENIQPWCISRQLWWGHQIPAWYGPDGKVFVAETEDEAIGHALGYYVEQGVITAEQGAGMARDPAKRDGFITRDEDVLDTWFSSALWPFSTLGWPDETPEVRRYYPTNVLVTGFDIIFFWVARMMMMGIHFMKEAPFSTVYIHALVRDEKGAKMSKSKGNVIDPLNLVDKYGADALRFTLAAMAVQGRDIKLSPQRVEGYRNFATKFWNACRFAEMNDCVVPARFDPTAATETLNRWIVHETARTACEVTEAIESSRFNDAASAIYRFVWNVYCDWYLELAKPVILGEDSPAKSETRAMVAWARDEILKLLHPFMPFITEELWAVTAERTRLLTLTEWPNKADQTRKRRTLIAAADPFIGSEPITDLLEPYFRDDAAEAEIGWVVDLVTAIRSVRAEMNIPPATLAPLVLAGASDESRARAQRWSDVIKRMSRLADISFADQAPAGAVQLLIRGEVAALPLKGIVDVAAQRTRLGKEIAKADADIARVDLKLADQNFIANAPGEIVEDEKEKREAAAARKAKFVEALERLKAAE.

A 'HIGH' region motif is present at residues 45 to 55 (PNVTGSLHMGH). A 'KMSKS' region motif is present at residues 571–575 (KMSKS). Residue K574 participates in ATP binding. The stretch at 894–950 (KEIAKADADIARVDLKLADQNFIANAPGEIVEDEKEKREAAAARKAKFVEALERLKA) forms a coiled coil.

The protein belongs to the class-I aminoacyl-tRNA synthetase family. ValS type 1 subfamily. As to quaternary structure, monomer.

The protein localises to the cytoplasm. It carries out the reaction tRNA(Val) + L-valine + ATP = L-valyl-tRNA(Val) + AMP + diphosphate. Its function is as follows. Catalyzes the attachment of valine to tRNA(Val). As ValRS can inadvertently accommodate and process structurally similar amino acids such as threonine, to avoid such errors, it has a 'posttransfer' editing activity that hydrolyzes mischarged Thr-tRNA(Val) in a tRNA-dependent manner. This Nitrobacter winogradskyi (strain ATCC 25391 / DSM 10237 / CIP 104748 / NCIMB 11846 / Nb-255) protein is Valine--tRNA ligase.